The following is a 145-amino-acid chain: D-aminoacyl-tRNA deacylase (145 aa).

The Gly-cisPro motif, important for rejection of L-amino acids motif lies at 137-138; it reads GP.

This sequence belongs to the DTD family. As to quaternary structure, homodimer.

The protein localises to the cytoplasm. The enzyme catalyses glycyl-tRNA(Ala) + H2O = tRNA(Ala) + glycine + H(+). It carries out the reaction a D-aminoacyl-tRNA + H2O = a tRNA + a D-alpha-amino acid + H(+). In terms of biological role, an aminoacyl-tRNA editing enzyme that deacylates mischarged D-aminoacyl-tRNAs. Also deacylates mischarged glycyl-tRNA(Ala), protecting cells against glycine mischarging by AlaRS. Acts via tRNA-based rather than protein-based catalysis; rejects L-amino acids rather than detecting D-amino acids in the active site. By recycling D-aminoacyl-tRNA to D-amino acids and free tRNA molecules, this enzyme counteracts the toxicity associated with the formation of D-aminoacyl-tRNA entities in vivo and helps enforce protein L-homochirality. The chain is D-aminoacyl-tRNA deacylase from Escherichia coli O139:H28 (strain E24377A / ETEC).